The following is a 702-amino-acid chain: Ribosomal RNA large subunit methyltransferase K/L (702 aa).

A THUMP domain is found at L43 to L154.

The protein belongs to the methyltransferase superfamily. RlmKL family.

The protein resides in the cytoplasm. The enzyme catalyses guanosine(2445) in 23S rRNA + S-adenosyl-L-methionine = N(2)-methylguanosine(2445) in 23S rRNA + S-adenosyl-L-homocysteine + H(+). It carries out the reaction guanosine(2069) in 23S rRNA + S-adenosyl-L-methionine = N(2)-methylguanosine(2069) in 23S rRNA + S-adenosyl-L-homocysteine + H(+). Its function is as follows. Specifically methylates the guanine in position 2445 (m2G2445) and the guanine in position 2069 (m7G2069) of 23S rRNA. The chain is Ribosomal RNA large subunit methyltransferase K/L from Salmonella arizonae (strain ATCC BAA-731 / CDC346-86 / RSK2980).